The sequence spans 76 residues: uncharacterized protein (76 aa).

The protein to L.innocua lin1255, lin1742 and lin2600.

This is an uncharacterized protein from Listeria innocua serovar 6a (strain ATCC BAA-680 / CLIP 11262).